Reading from the N-terminus, the 21-residue chain is Conchiolin protein p20 (21 aa).

Over residues 1 to 14 (YQRXSRYYYYXGPP) the composition is skewed to low complexity. Positions 1–21 (YQRXSRYYYYXGPPDDIDDRY) are disordered.

The protein belongs to the N16 matrix protein family. As to quaternary structure, homooligomer; disulfide-linked. May also be disulfide-linked to insoluble organic matrix. According to PubMed:11250534, amino acids 4 and 11 may be sulfated or phosphorylated. By similarity with the N14 matrix protein, amino-acid 4 may be a cysteine involved in a disulfide bond. Component of conchiolin, the organic matrix of nacre. Is dispersed in calcium carbonate and also linked by disulfide bonds to the organic core of nacre.

The protein localises to the secreted. Its subcellular location is the extracellular space. It localises to the extracellular matrix. May be specifically involved in the formation of the nacreous layer. This chain is Conchiolin protein p20, found in Pinctada maxima (Silver-lipped pearl oyster).